The chain runs to 256 residues: LexA repressor (256 aa).

Residues Met-1–Pro-31 form a disordered region. The segment at residues Val-53 to Lys-73 is a DNA-binding region (H-T-H motif). Residues Ser-180 and Lys-217 each act as for autocatalytic cleavage activity in the active site.

Belongs to the peptidase S24 family. Homodimer.

It carries out the reaction Hydrolysis of Ala-|-Gly bond in repressor LexA.. In terms of biological role, represses a number of genes involved in the response to DNA damage (SOS response), including recA and lexA. In the presence of single-stranded DNA, RecA interacts with LexA causing an autocatalytic cleavage which disrupts the DNA-binding part of LexA, leading to derepression of the SOS regulon and eventually DNA repair. In Frankia casuarinae (strain DSM 45818 / CECT 9043 / HFP020203 / CcI3), this protein is LexA repressor.